The following is a 214-amino-acid chain: MTPAETRTPDHLTLALPKGRILEEAVTLLSRAGLPLTMPEKSRALRHEFPGVTLLELRNQDVPVYVDLGVADAGIVGKDVLLESGRQVYEPVDLRFAACRLSLIREVGAAGPVQRVGTKYPRATREYLNARGIPAEIVKLSGNIELAALTGLADAVVDLVQTGSTLRANNLEELDVLFHSTARLVVNRAALKLRRDRLRPLIEQLRELVQNEPA.

Belongs to the ATP phosphoribosyltransferase family. Short subfamily. Heteromultimer composed of HisG and HisZ subunits.

It localises to the cytoplasm. The enzyme catalyses 1-(5-phospho-beta-D-ribosyl)-ATP + diphosphate = 5-phospho-alpha-D-ribose 1-diphosphate + ATP. The protein operates within amino-acid biosynthesis; L-histidine biosynthesis; L-histidine from 5-phospho-alpha-D-ribose 1-diphosphate: step 1/9. Its function is as follows. Catalyzes the condensation of ATP and 5-phosphoribose 1-diphosphate to form N'-(5'-phosphoribosyl)-ATP (PR-ATP). Has a crucial role in the pathway because the rate of histidine biosynthesis seems to be controlled primarily by regulation of HisG enzymatic activity. In Deinococcus deserti (strain DSM 17065 / CIP 109153 / LMG 22923 / VCD115), this protein is ATP phosphoribosyltransferase.